The sequence spans 1196 residues: Jouberin (1196 aa).

Residues 13–45 (KVRFEELLKTHSDLMREKKKLKKKLVRSEENIS) are a coiled coil. Serine 45 is subject to Phosphoserine. Disordered stretches follow at residues 56–186 (MKET…EEDE), 215–242 (QLTY…KEVP), and 254–327 (ISGD…HEIT). Positions 80-91 (DDVSAANTNNLK) are enriched in polar residues. Positions 92–101 (KSTRVTKNKL) are enriched in basic residues. Polar residues predominate over residues 102–113 (RNTQLATENPNG). 3 stretches are compositionally biased toward basic and acidic residues: residues 141-154 (LKPE…DSTH), 166-179 (DHQK…GREE), and 224-233 (LFHDDKLSSE). The tract at residues 141-434 (LKPETPENKV…VFNENFPYLL (294 aa)) is interaction with HAP1. Over residues 300–309 (KPKKTKKKTK) the composition is skewed to basic residues. WD repeat units follow at residues 607–649 (AGER…FMRE), 652–691 (GHLN…TNTF), 695–735 (PHPS…DSAI), 742–781 (VHKS…NDLE), 797–837 (EFKG…ARKF), 841–880 (ANYR…QVAM), and 885–926 (PFKS…AQQE). Phosphoserine is present on serine 1002. Residues 1051–1111 (DTAPTVVALY…PANHVASETL (61 aa)) enclose the SH3 domain. The segment at 1115 to 1196 (LPPEIKERSP…QAGRKVTLIE (82 aa)) is disordered. Composition is skewed to basic and acidic residues over residues 1117 to 1136 (PEIK…KIEK) and 1161 to 1182 (THSE…DTRM). At serine 1123 the chain carries Phosphoserine.

Self-associates. Part of the tectonic-like complex (also named B9 complex). Interacts with MKS1. Interacts with NPHP1; probably as heterodimers and/or AHI1(2):NPHP1(2) heterotetramers. Interacts (via SH3 domain) with the dynamin GTPase DNM2. Interacts with HAP1; probably as AHI1(2):HAP1(2) heterotetramers. Interacts with RAB8A. Interacts with CEND1. Interacts with CTNNB1/beta-catenin. Interacts with SPATA7. In terms of tissue distribution, highly expressed in the most primitive normal hematopoietic cells. Expressed in brain, particularly in neurons that give rise to the crossing axons of the corticospinal tract and superior cerebellar peduncles. Expressed in kidney (renal collecting duct cells) (at protein level).

The protein localises to the cytoplasm. It is found in the cytoskeleton. It localises to the cilium basal body. The protein resides in the cell junction. Its subcellular location is the adherens junction. The protein localises to the microtubule organizing center. It is found in the centrosome. It localises to the centriole. Functionally, involved in vesicle trafficking and required for ciliogenesis, formation of primary non-motile cilium, and recruitment of RAB8A to the basal body of primary cilium. Component of the tectonic-like complex, a complex localized at the transition zone of primary cilia and acting as a barrier that prevents diffusion of transmembrane proteins between the cilia and plasma membranes. Involved in neuronal differentiation. As a positive modulator of classical Wnt signaling, may play a crucial role in ciliary signaling during cerebellum embryonic development. The sequence is that of Jouberin (AHI1) from Homo sapiens (Human).